Consider the following 480-residue polypeptide: UDP-glycosyltransferase 72B1 (480 aa).

H19 acts as the Proton acceptor in catalysis. The active-site Charge relay is D117. Residues S277, W346, A347, and H364 each contribute to the UDP site. S277, W346, A347, H364, W367, N368, S369, E372, Y386, E388, and Q389 together coordinate UDP-alpha-D-glucose. UDP contacts are provided by N368, S369, E372, and Y386.

This sequence belongs to the UDP-glycosyltransferase family.

It catalyses the reaction hydroquinone + UDP-alpha-D-glucose = hydroquinone O-beta-D-glucopyranoside + UDP + H(+). Functionally, bifunctional O-glycosyltransferase and N-glycosyltransferase that can detoxify xenobiotics. Possesses high activity to metabolize the persistent pollutants 2,4,5-trichlorophenol (TCP) and 3,4-dichloroaniline (DCA). Also active on benzoates and benzoate derivatives in vitro. In Arabidopsis thaliana (Mouse-ear cress), this protein is UDP-glycosyltransferase 72B1 (UGT72B1).